Consider the following 157-residue polypeptide: SsrA-binding protein (157 aa).

Residues 131–157 (KQLHDKRDTEKKRDWSREKGRIMRARG) are disordered. Residues 132 to 151 (QLHDKRDTEKKRDWSREKGR) are compositionally biased toward basic and acidic residues.

It belongs to the SmpB family.

The protein resides in the cytoplasm. Required for rescue of stalled ribosomes mediated by trans-translation. Binds to transfer-messenger RNA (tmRNA), required for stable association of tmRNA with ribosomes. tmRNA and SmpB together mimic tRNA shape, replacing the anticodon stem-loop with SmpB. tmRNA is encoded by the ssrA gene; the 2 termini fold to resemble tRNA(Ala) and it encodes a 'tag peptide', a short internal open reading frame. During trans-translation Ala-aminoacylated tmRNA acts like a tRNA, entering the A-site of stalled ribosomes, displacing the stalled mRNA. The ribosome then switches to translate the ORF on the tmRNA; the nascent peptide is terminated with the 'tag peptide' encoded by the tmRNA and targeted for degradation. The ribosome is freed to recommence translation, which seems to be the essential function of trans-translation. This Rhodopseudomonas palustris (strain BisB18) protein is SsrA-binding protein.